The primary structure comprises 375 residues: Queuine tRNA-ribosyltransferase (375 aa).

Catalysis depends on Asp89, which acts as the Proton acceptor. Residues 89 to 93 (DSGGF), Asp143, Gln187, and Gly214 contribute to the substrate site. Residues 245 to 251 (GVGKPED) form an RNA binding region. The active-site Nucleophile is Asp264. Positions 269-273 (TRNAR) are RNA binding; important for wobble base 34 recognition. 4 residues coordinate Zn(2+): Cys302, Cys304, Cys307, and His333.

The protein belongs to the queuine tRNA-ribosyltransferase family. As to quaternary structure, homodimer. Within each dimer, one monomer is responsible for RNA recognition and catalysis, while the other monomer binds to the replacement base PreQ1. It depends on Zn(2+) as a cofactor.

The catalysed reaction is 7-aminomethyl-7-carbaguanine + guanosine(34) in tRNA = 7-aminomethyl-7-carbaguanosine(34) in tRNA + guanine. The protein operates within tRNA modification; tRNA-queuosine biosynthesis. In terms of biological role, catalyzes the base-exchange of a guanine (G) residue with the queuine precursor 7-aminomethyl-7-deazaguanine (PreQ1) at position 34 (anticodon wobble position) in tRNAs with GU(N) anticodons (tRNA-Asp, -Asn, -His and -Tyr). Catalysis occurs through a double-displacement mechanism. The nucleophile active site attacks the C1' of nucleotide 34 to detach the guanine base from the RNA, forming a covalent enzyme-RNA intermediate. The proton acceptor active site deprotonates the incoming PreQ1, allowing a nucleophilic attack on the C1' of the ribose to form the product. After dissociation, two additional enzymatic reactions on the tRNA convert PreQ1 to queuine (Q), resulting in the hypermodified nucleoside queuosine (7-(((4,5-cis-dihydroxy-2-cyclopenten-1-yl)amino)methyl)-7-deazaguanosine). The chain is Queuine tRNA-ribosyltransferase from Salmonella arizonae (strain ATCC BAA-731 / CDC346-86 / RSK2980).